Here is a 229-residue protein sequence, read N- to C-terminus: 23 kDa piroplasm membrane protein (229 aa).

The N-terminal stretch at 1 to 19 is a signal peptide; it reads MNKYFKVFFFVLLTHALKS. Topologically, residues 20–203 are extracellular; the sequence is SLIFGQATLQ…EKEETSKKKY (184 aa). A helical transmembrane segment spans residues 204–224; that stretch reads VLMVVVVVVFVVVASLVVFLV. Residues 225–229 are Cytoplasmic-facing; the sequence is KFCLK.

Its subcellular location is the membrane. The chain is 23 kDa piroplasm membrane protein from Theileria annulata.